We begin with the raw amino-acid sequence, 198 residues long: ATP-dependent Clp protease proteolytic subunit (198 aa).

Serine 98 acts as the Nucleophile in catalysis. The active site involves histidine 123.

The protein belongs to the peptidase S14 family. As to quaternary structure, fourteen ClpP subunits assemble into 2 heptameric rings which stack back to back to give a disk-like structure with a central cavity, resembling the structure of eukaryotic proteasomes.

It is found in the cytoplasm. The catalysed reaction is Hydrolysis of proteins to small peptides in the presence of ATP and magnesium. alpha-casein is the usual test substrate. In the absence of ATP, only oligopeptides shorter than five residues are hydrolyzed (such as succinyl-Leu-Tyr-|-NHMec, and Leu-Tyr-Leu-|-Tyr-Trp, in which cleavage of the -Tyr-|-Leu- and -Tyr-|-Trp bonds also occurs).. In terms of biological role, cleaves peptides in various proteins in a process that requires ATP hydrolysis. Has a chymotrypsin-like activity. Plays a major role in the degradation of misfolded proteins. The chain is ATP-dependent Clp protease proteolytic subunit from Halothermothrix orenii (strain H 168 / OCM 544 / DSM 9562).